Reading from the N-terminus, the 185-residue chain is UPF0215 protein APE_0476.1 (185 aa).

Belongs to the UPF0215 family.

In Aeropyrum pernix (strain ATCC 700893 / DSM 11879 / JCM 9820 / NBRC 100138 / K1), this protein is UPF0215 protein APE_0476.1.